Consider the following 368-residue polypeptide: F-box only protein 28 (368 aa).

Basic and acidic residues predominate over residues Met-1 to Glu-11. Residues Met-1–Gln-57 are disordered. Positions Glu-12–Gly-21 are enriched in gly residues. The segment covering Leu-32–Ala-52 has biased composition (pro residues). An F-box domain is found at Asn-61–Val-109. Residues Ser-235 and Ser-242 each carry the phosphoserine modification. Residue Thr-270 is modified to Phosphothreonine. The disordered stretch occupies residues Met-328–Lys-368. Ser-344 carries the post-translational modification Phosphoserine.

As to quaternary structure, part of a SCF (SKP1-cullin-F-box) protein ligase complex.

The protein resides in the chromosome. It localises to the centromere. Its subcellular location is the kinetochore. Probably recognizes and binds to some phosphorylated proteins and promotes their ubiquitination and degradation. The protein is F-box only protein 28 (FBXO28) of Bos taurus (Bovine).